The chain runs to 449 residues: Omega-amino acid--pyruvate aminotransferase (449 aa).

A substrate-binding site is contributed by tryptophan 60. Position 119-120 (glycine 119–serine 120) interacts with pyridoxal 5'-phosphate. An N6-(pyridoxal phosphate)lysine modification is found at lysine 288. Pyridoxal 5'-phosphate is bound at residue threonine 327. Residues arginine 414 and glutamine 421 each coordinate substrate.

Belongs to the class-III pyridoxal-phosphate-dependent aminotransferase family. Homotetramer. The cofactor is pyridoxal 5'-phosphate.

The catalysed reaction is 3-oxopropanoate + L-alanine = beta-alanine + pyruvate. In terms of biological role, catalyzes transamination between a variety of omega-amino acids, mono and diamines, and pyruvate. Plays a pivotal role in the metabolism of the omega amino acids. This chain is Omega-amino acid--pyruvate aminotransferase, found in Pseudomonas putida (Arthrobacter siderocapsulatus).